The sequence spans 153 residues: MAEHLMSDVPFWQSKTLDEMSDAEWESLCDGCGQCCLHKLMDEDTDEIYFTNVACRQLNIKTCQCRNYERRFEFEPDCIKLTRENLPTFEWLPMTCAYRLLAEGKGLPAWHPLLTGSKAAMHGERISVRHIAVKESEVIDWQDHILNKPDWAQ.

The protein belongs to the UPF0260 family.

The polypeptide is UPF0260 protein YcgN (Escherichia coli O6:K15:H31 (strain 536 / UPEC)).